The sequence spans 520 residues: Cytochrome P450 1A1 (520 aa).

F230 is a binding site for substrate. Position 464 (C464) interacts with heme.

It belongs to the cytochrome P450 family. Requires heme as cofactor.

The protein localises to the endoplasmic reticulum membrane. It localises to the microsome membrane. The catalysed reaction is an organic molecule + reduced [NADPH--hemoprotein reductase] + O2 = an alcohol + oxidized [NADPH--hemoprotein reductase] + H2O + H(+). Functionally, cytochromes P450 are a group of heme-thiolate monooxygenases. In liver microsomes, this enzyme is involved in an NADPH-dependent electron transport pathway. It oxidizes a variety of structurally unrelated compounds, including steroids, fatty acids, and xenobiotics. This is Cytochrome P450 1A1 (cyp1a1) from Dicentrarchus labrax (European seabass).